A 271-amino-acid polypeptide reads, in one-letter code: Formamidopyrimidine-DNA glycosylase (271 aa).

The active-site Schiff-base intermediate with DNA is the Pro-2. Glu-3 serves as the catalytic Proton donor. Lys-57 serves as the catalytic Proton donor; for beta-elimination activity. His-90, Arg-109, and Lys-151 together coordinate DNA. An FPG-type zinc finger spans residues 236 to 270; that stretch reads HVYGRGGKTCTQCGHMLSEIKLGQRATVFCSLCQQ. Arg-260 serves as the catalytic Proton donor; for delta-elimination activity.

The protein belongs to the FPG family. In terms of assembly, monomer. Zn(2+) is required as a cofactor.

The enzyme catalyses Hydrolysis of DNA containing ring-opened 7-methylguanine residues, releasing 2,6-diamino-4-hydroxy-5-(N-methyl)formamidopyrimidine.. The catalysed reaction is 2'-deoxyribonucleotide-(2'-deoxyribose 5'-phosphate)-2'-deoxyribonucleotide-DNA = a 3'-end 2'-deoxyribonucleotide-(2,3-dehydro-2,3-deoxyribose 5'-phosphate)-DNA + a 5'-end 5'-phospho-2'-deoxyribonucleoside-DNA + H(+). Its function is as follows. Involved in base excision repair of DNA damaged by oxidation or by mutagenic agents. Acts as a DNA glycosylase that recognizes and removes damaged bases. Has a preference for oxidized purines, such as 7,8-dihydro-8-oxoguanine (8-oxoG). Has AP (apurinic/apyrimidinic) lyase activity and introduces nicks in the DNA strand. Cleaves the DNA backbone by beta-delta elimination to generate a single-strand break at the site of the removed base with both 3'- and 5'-phosphates. This Shewanella pealeana (strain ATCC 700345 / ANG-SQ1) protein is Formamidopyrimidine-DNA glycosylase.